We begin with the raw amino-acid sequence, 118 residues long: Large ribosomal subunit protein bL20 (118 aa).

Belongs to the bacterial ribosomal protein bL20 family.

In terms of biological role, binds directly to 23S ribosomal RNA and is necessary for the in vitro assembly process of the 50S ribosomal subunit. It is not involved in the protein synthesizing functions of that subunit. In Syntrophotalea carbinolica (strain DSM 2380 / NBRC 103641 / GraBd1) (Pelobacter carbinolicus), this protein is Large ribosomal subunit protein bL20.